The sequence spans 191 residues: Cytochrome c biogenesis ATP-binding export protein CcmA (191 aa).

The ABC transporter domain occupies 6–189 (LVATDIACRR…RVRTLAIRNF (184 aa)). ATP is bound at residue 38–45 (GANGIGKS).

This sequence belongs to the ABC transporter superfamily. CcmA exporter (TC 3.A.1.107) family. The complex is composed of two ATP-binding proteins (CcmA) and two transmembrane proteins (CcmB).

Its subcellular location is the cell inner membrane. It catalyses the reaction heme b(in) + ATP + H2O = heme b(out) + ADP + phosphate + H(+). Its function is as follows. Part of the ABC transporter complex CcmAB involved in the biogenesis of c-type cytochromes; once thought to export heme, this seems not to be the case, but its exact role is uncertain. Responsible for energy coupling to the transport system. This Novosphingobium aromaticivorans (strain ATCC 700278 / DSM 12444 / CCUG 56034 / CIP 105152 / NBRC 16084 / F199) protein is Cytochrome c biogenesis ATP-binding export protein CcmA.